A 2034-amino-acid polypeptide reads, in one-letter code: Pecanex-like protein 3 (2034 aa).

2 helical membrane-spanning segments follow: residues 33–53 and 54–74; these read CFHL…YMVL and PPSL…FATI. A disordered region spans residues 96–118; the sequence is STMGELEEEPAQGDSNPPRDPGV. Residue Ser127 is modified to Phosphoserine. Thr129 carries the phosphothreonine modification. 3 disordered regions span residues 193–242, 260–517, and 540–625; these read IGDL…PLLK, DRAL…LRPP, and VLPA…SHSR. A compositionally biased stretch (polar residues) spans 294 to 303; that stretch reads KAGSSDSCFS. Basic and acidic residues predominate over residues 305–319; that stretch reads TDRETLSSFKSEKTN. N-linked (GlcNAc...) asparagine glycosylation is present at Asn319. Residue Thr370 is modified to Phosphothreonine. Residues 391 to 409 are compositionally biased toward basic residues; the sequence is PSKRQPPLRRHSPPGRAPR. A phosphoserine mark is found at Ser392 and Ser431. Polar residues predominate over residues 427–436; that stretch reads GSELSPASSL. The span at 444-460 shows a compositional bias: low complexity; sequence TDSSSSTSCYSPESSRG. A compositionally biased stretch (polar residues) spans 488-497; the sequence is TQRTPSTASA. At Ser505 the chain carries Phosphoserine. Transmembrane regions (helical) follow at residues 790–812, 819–836, 852–872, 880–900, 903–923, 946–968, and 980–1000; these read VLEN…LLLL, IWVF…YSLL, WVIA…IWLL, PFPP…FFCA, VATV…LPQV, SPLT…YGFC, and HVPV…YHLS. Phosphoserine is present on Ser1025. A run of 4 helical transmembrane segments spans residues 1053–1073, 1078–1098, 1244–1264, and 1280–1300; these read LVMC…TVFI, VLGF…HYLL, FVLT…HAFA, and LLSG…VFIM. Position 1697 is a phosphoserine (Ser1697). Asn1770 carries N-linked (GlcNAc...) asparagine glycosylation. The tract at residues 1844 to 2034 is disordered; that stretch reads GGLTSLSNNP…AAQPLLEHQY (191 aa). Residues 1890–1910 are compositionally biased toward pro residues; it reads RPPPLLQWPPPRLPGPPPASP. A Phosphoserine modification is found at Ser1909. Low complexity predominate over residues 1925–1939; it reads GLLSSEGPSGKWSLG. At Ser1955 the chain carries Phosphoserine. Low complexity predominate over residues 1969–1978; sequence LSLSLSLSLS.

Belongs to the pecanex family.

Its subcellular location is the membrane. The protein is Pecanex-like protein 3 of Homo sapiens (Human).